The sequence spans 61 residues: Small ribosomal subunit protein uS14 (61 aa).

Residues Cys24, Cys27, Cys40, and Cys43 each coordinate Zn(2+).

It belongs to the universal ribosomal protein uS14 family. Zinc-binding uS14 subfamily. As to quaternary structure, part of the 30S ribosomal subunit. Contacts proteins S3 and S10. Requires Zn(2+) as cofactor.

Binds 16S rRNA, required for the assembly of 30S particles and may also be responsible for determining the conformation of the 16S rRNA at the A site. The sequence is that of Small ribosomal subunit protein uS14 from Moorella thermoacetica (strain ATCC 39073 / JCM 9320).